The primary structure comprises 46 residues: MVKVYVLVDNKVVDLRPPGMKAEWGFSAYIDAKEPVLMDSGIRYRL.

This is an uncharacterized protein from Archaeoglobus fulgidus (strain ATCC 49558 / DSM 4304 / JCM 9628 / NBRC 100126 / VC-16).